A 568-amino-acid polypeptide reads, in one-letter code: MPHAPARSGDAMSAAAPPCCTSLLGLSLSMFVAPCALAATPLEGAVVSAPAPTPPTPDLAYPELFQAVQRGELFDDQKHFVDFLPLRDPALINADYLAQHEHAGFDLRKFVDANFEESPPVQTDAIRQDTALREHIDALWPKLVRSQTNVPAHSSLLALPHPYVVPGGRFREVYYWDSYFTMLGLVKSGETTLSRQMLDNFAYLIDTYGHIPNGNRTYYLSRSQPPFFSYMVELQAGVEGEAVYQRYLPQLQKEYAYWMQGGDDLQPGQAARHVVRLADGSVLNRYWDERDTPRPEAWLHDTRTAAEAHDRPAADVYRDLRAGAESGWDYTSRWLADGKTLSTIRTTAIVPIDLNSLLYHLERTLAQACAHTGTACSQDYAALAQQRKQAIDAHLWNAAGYYADYDWQTRTLSNQVTAAALYPLFAGLASADHAKRTATSVRARLLRPGGLATTALKTGQQWDEPNGWAPLQWVAVDGLRRYGEDGLARTIGERFLTQVQALFAREHKLVEKYGLDADAAGGGGGEYALQDGFGWTNGVTLMLLNLYPSPGAIQAPAKTKRKPEPAAP.

A signal peptide spans 1–38; the sequence is MPHAPARSGDAMSAAAPPCCTSLLGLSLSMFVAPCALA. Substrate-binding positions include Arg169, 176–177, Asn213, 222–224, 294–296, and Gly327; these read WD, RSQ, and RPE. Catalysis depends on proton donor/acceptor residues Asp329 and Glu511. Glu526 serves as a coordination point for substrate.

It belongs to the glycosyl hydrolase 37 family.

It is found in the periplasm. It catalyses the reaction alpha,alpha-trehalose + H2O = alpha-D-glucose + beta-D-glucose. Its function is as follows. Provides the cells with the ability to utilize trehalose at high osmolarity by splitting it into glucose molecules that can subsequently be taken up by the phosphotransferase-mediated uptake system. The polypeptide is Periplasmic trehalase (Xanthomonas campestris pv. campestris (strain B100)).